A 534-amino-acid chain; its full sequence is MAQDDSYEEKPEVISSDSGGSGYSTEIQIVGTVTSSDGSYVEYEIVHQKRSVWRRYSDFESLVKLMRRQYPAAIVPPIPGKQSLLSYAKHPRKAKSDAEFLNFRSRMLELFLRQCLLHPCIRSNPIFDKFIHSTVSWHVTLSSLDLPKDSNTDPLRLPPIATEHDPFAHLRSSMPLVMANSLSPPSSRALKPIHSLSNPSTASSLEPSSPLGSEDECHPPTSDMQPTHELNESPSTPTAPDFPHYNSSPSELSPTQRRSSISNGKDAPSPVLKDLTSYTQEVIVCRKFLHHSLSPSIHSTLSSISKMESCLSKLGSAFHSLTALNEIQLANHLQVIANAFEFSGMYAKEFEQEFNSSVYEKMVQSMQLAKCAADALKYKQLKIQQRDFLQDQLIHSNTMSATDSMVAASPTIHPATRLNTIQRAVVSQAKKGYTIFGRLQNVLHDFVEGETSISKESLQQHKNTIENQLAAANWDCQKIDEFMDAELKFYKECQTSQWEEIIKSVHECIYKWAQTNLQRWLRTREELENLSKDI.

The interval 1-21 (MAQDDSYEEKPEVISSDSGGS) is disordered. The 137-residue stretch at 1–137 (MAQDDSYEEK…DKFIHSTVSW (137 aa)) folds into the PX domain. Residues arginine 55, serine 57, lysine 81, and arginine 104 each contribute to the a 1,2-diacyl-sn-glycero-3-phospho-(1D-myo-inositol-3-phosphate) site. The disordered stretch occupies residues 179–272 (ANSLSPPSSR…NGKDAPSPVL (94 aa)). A compositionally biased stretch (low complexity) spans 203-212 (SSLEPSSPLG). The segment covering 245 to 263 (YNSSPSELSPTQRRSSISN) has biased composition (polar residues).

It belongs to the sorting nexin family.

The protein localises to the cytoplasm. It localises to the endosome membrane. Its subcellular location is the preautophagosomal structure membrane. In terms of biological role, required for cytoplasm to vacuole transport (Cvt), pexophagy and mitophagy. Also involved in endoplasmic reticulum-specific autophagic process and is essential for the survival of cells subjected to severe ER stress. Functions in protein retrieval from the endocytic pathway. This Schizosaccharomyces pombe (strain 972 / ATCC 24843) (Fission yeast) protein is Autophagy-related protein 20 (atg20).